A 588-amino-acid polypeptide reads, in one-letter code: Proteasome-associated ATPase (588 aa).

Over residues 1–10 the composition is skewed to basic and acidic residues; it reads MAAHDDDMNR. Residues 1 to 23 are disordered; it reads MAAHDDDMNRGIRPGRGSDDPAG. A coiled-coil region spans residues 47–94; that stretch reads RILEERIVELQTNLAGVSAQNERLANTLREARDQIVALKEEVDRLAQP. Position 276 to 281 (276 to 281) interacts with ATP; sequence GCGKTL. The segment at 587–588 is docks into pockets in the proteasome alpha-ring; that stretch reads YL.

Belongs to the AAA ATPase family. In terms of assembly, homohexamer. Assembles into a hexameric ring structure that caps the 20S proteasome core. Strongly interacts with the prokaryotic ubiquitin-like protein Pup through a hydrophobic interface; the interacting region of ARC lies in its N-terminal coiled-coil domain. There is one Pup binding site per ARC hexamer ring. Upon ATP-binding, the C-terminus of ARC interacts with the alpha-rings of the proteasome core, possibly by binding to the intersubunit pockets.

The protein operates within protein degradation; proteasomal Pup-dependent pathway. Its function is as follows. ATPase which is responsible for recognizing, binding, unfolding and translocation of pupylated proteins into the bacterial 20S proteasome core particle. May be essential for opening the gate of the 20S proteasome via an interaction with its C-terminus, thereby allowing substrate entry and access to the site of proteolysis. Thus, the C-termini of the proteasomal ATPase may function like a 'key in a lock' to induce gate opening and therefore regulate proteolysis. The chain is Proteasome-associated ATPase from Streptomyces avermitilis (strain ATCC 31267 / DSM 46492 / JCM 5070 / NBRC 14893 / NCIMB 12804 / NRRL 8165 / MA-4680).